Reading from the N-terminus, the 290-residue chain is Enoyl-CoA hydratase, mitochondrial (290 aa).

Residues 1-27 (MATLRVLLSCVRGPLRPPVRCPAWRPF) constitute a mitochondrion transit peptide. Thr-46 bears the Phosphothreonine mark. A substrate-binding site is contributed by 98–101 (ADIK). Lys-101 is subject to N6-acetyllysine; alternate. Lys-101 is modified (N6-succinyllysine; alternate). A Phosphoserine modification is found at Ser-114. Position 115 is an N6-acetyllysine; alternate (Lys-115). Residue Lys-115 is modified to N6-succinyllysine; alternate. Lys-118 is subject to N6-acetyllysine. Residue Gly-141 participates in substrate binding. Lys-204 is modified (N6-succinyllysine). Residue Lys-211 is modified to N6-acetyllysine.

This sequence belongs to the enoyl-CoA hydratase/isomerase family. As to quaternary structure, homohexamer; dimer of trimers.

It localises to the mitochondrion matrix. The enzyme catalyses a (3S)-3-hydroxyacyl-CoA = a (2E)-enoyl-CoA + H2O. It catalyses the reaction a (3E)-enoyl-CoA = a 4-saturated (2E)-enoyl-CoA. The catalysed reaction is (3E)-hexenoyl-CoA = (2E)-hexenoyl-CoA. It carries out the reaction (3S)-3-hydroxybutanoyl-CoA = (2E)-butenoyl-CoA + H2O. The enzyme catalyses 3-hydroxyisovaleryl-CoA = 3-methylbut-2-enoyl-CoA + H2O. It catalyses the reaction 3-hydroxypropanoyl-CoA = acryloyl-CoA + H2O. The catalysed reaction is 3-hydroxybutanoyl-CoA = (2E)-butenoyl-CoA + H2O. It carries out the reaction 2-methylpropenoyl-CoA + H2O = (S)-3-hydroxyisobutanoyl-CoA. The enzyme catalyses (3S)-hydroxyhexanoyl-CoA = (2E)-hexenoyl-CoA + H2O. It catalyses the reaction (3S)-hydroxydecanoyl-CoA = (2E)-decenoyl-CoA + H2O. It functions in the pathway lipid metabolism; fatty acid beta-oxidation. In terms of biological role, converts unsaturated trans-2-enoyl-CoA species ((2E)-enoyl-CoA) to the corresponding (3S)-3-hydroxyacyl-CoA species through addition of a water molecule to the double bond. Catalyzes the hydration of medium- and short-chained fatty enoyl-CoA thioesters from 4 carbons long (C4) up to C16. Has high substrate specificity for crotonyl-CoA ((2E)-butenoyl-CoA) and moderate specificity for acryloyl-CoA, 3-methylcrotonyl-CoA (3-methyl-(2E)-butenoyl-CoA) and methacrylyl-CoA ((2E)-2-methylpropenoyl-CoA). Can bind tiglyl-CoA (2-methylcrotonoyl-CoA), but hydrates only a small amount of this substrate. Plays a key role in the beta-oxidation spiral of short- and medium-chain fatty acid oxidation. At a lower rate than the hydratase reaction, catalyzes the isomerase reaction of trans-3-enoyl-CoA species (such as (3E)-hexenoyl-CoA) to trans-2-enoyl-CoA species (such as (2E)-hexenoyl-CoA), which are subsequently hydrated to 3(S)-3-hydroxyacyl-CoA species (such as (3S)-hydroxyhexanoyl-CoA). This chain is Enoyl-CoA hydratase, mitochondrial (ECHS1), found in Pongo abelii (Sumatran orangutan).